Here is a 93-residue protein sequence, read N- to C-terminus: Phosphoribosyl-ATP pyrophosphatase (93 aa).

Belongs to the PRA-PH family.

Its subcellular location is the cytoplasm. The catalysed reaction is 1-(5-phospho-beta-D-ribosyl)-ATP + H2O = 1-(5-phospho-beta-D-ribosyl)-5'-AMP + diphosphate + H(+). Its pathway is amino-acid biosynthesis; L-histidine biosynthesis; L-histidine from 5-phospho-alpha-D-ribose 1-diphosphate: step 2/9. The chain is Phosphoribosyl-ATP pyrophosphatase from Mycobacterium sp. (strain JLS).